The primary structure comprises 200 residues: Recombination protein RecR (200 aa).

A C4-type zinc finger spans residues 59–74 (CEKCNTFTEAQVCEVC). Residues 82 to 177 (ALLCVVETPA…AVTRLARGVP (96 aa)) form the Toprim domain.

This sequence belongs to the RecR family.

In terms of biological role, may play a role in DNA repair. It seems to be involved in an RecBC-independent recombinational process of DNA repair. It may act with RecF and RecO. The chain is Recombination protein RecR from Burkholderia pseudomallei (strain 1106a).